The chain runs to 598 residues: Transcription factor COE3 (598 aa).

The tract at residues 1 to 23 (MFGIQENIPRGGTTMKEEPLGGG) is disordered. Residues 63–66 (RKSN) form an interaction with DNA region. The C5-type zinc-finger motif lies at 151–170 (CRVLLTHEIMCSRCCDKKSC). Interaction with DNA stretches follow at residues 197–204 (NCLKNAGN) and 236–239 (NNSK). The region spanning 264–347 (PCIKAISPSE…KGAPGRFVYT (84 aa)) is the IPT/TIG domain. Residues 452 to 483 (TSQANDQVGYSRNTSSVSPRGYVPSSTPQQSN) form a disordered region.

This sequence belongs to the COE family. As to quaternary structure, forms either a homodimer or a heterodimer with a related family member.

It localises to the nucleus. Acts as a transcriptional activator. In Xenopus laevis (African clawed frog), this protein is Transcription factor COE3 (coe3).